The following is a 170-amino-acid chain: Zinc finger matrin-type protein 5 (170 aa).

The C3H1-type zinc finger occupies 51 to 79 (EQNKRPCRKFLLTGQCDFGSNCRFSHMSE). Residues 150-170 (PPSLRAPPPGGWPLQPSVQWG) are disordered.

In terms of assembly, component of the U11/U12 snRNPs that are part of the U12-type spliceosome.

The protein resides in the nucleus. The polypeptide is Zinc finger matrin-type protein 5 (ZMAT5) (Bos taurus (Bovine)).